Consider the following 284-residue polypeptide: Cell division protein FtsQ (284 aa).

The span at 1–10 (MAFGKSKNRR) shows a compositional bias: basic residues. Positions 1–23 (MAFGKSKNRRRQDAAQQKEAVRG) are disordered. The Cytoplasmic portion of the chain corresponds to 1–34 (MAFGKSKNRRRQDAAQQKEAVRGAVRSQGPRALK). The chain crosses the membrane as a helical span at residues 35–52 (VLGLTLGTGLLVWGGAAL). Residues 53–284 (REWTLTSPRF…ASERSGASMR (232 aa)) are Periplasmic-facing. Residues 62–130 (FELEAVSFSG…NRVSVEVTEH (69 aa)) form the POTRA domain.

It belongs to the FtsQ/DivIB family. FtsQ subfamily.

Its subcellular location is the cell inner membrane. Functionally, essential cell division protein. The chain is Cell division protein FtsQ from Myxococcus fulvus (strain ATCC BAA-855 / HW-1).